A 640-amino-acid polypeptide reads, in one-letter code: DNA mismatch repair protein MutL (640 aa).

Disordered regions lie at residues 332–353 (PNVQVEEKPDSPRPTGESFNFP) and 408–431 (PAHTEASLTPPKQAEPEGNPTFHD).

Belongs to the DNA mismatch repair MutL/HexB family.

This protein is involved in the repair of mismatches in DNA. It is required for dam-dependent methyl-directed DNA mismatch repair. May act as a 'molecular matchmaker', a protein that promotes the formation of a stable complex between two or more DNA-binding proteins in an ATP-dependent manner without itself being part of a final effector complex. This is DNA mismatch repair protein MutL from Chloroherpeton thalassium (strain ATCC 35110 / GB-78).